A 93-amino-acid polypeptide reads, in one-letter code: Large ribosomal subunit protein uL23cz/uL23cy (93 aa).

Belongs to the universal ribosomal protein uL23 family. In terms of assembly, part of the 50S ribosomal subunit.

The protein resides in the plastid. Its subcellular location is the chloroplast. Functionally, binds to 23S rRNA. This Atropa belladonna (Belladonna) protein is Large ribosomal subunit protein uL23cz/uL23cy (rpl23-A).